The chain runs to 227 residues: Probable methylthioribulose-1-phosphate dehydratase (227 aa).

C87 provides a ligand contact to substrate. Positions 105 and 107 each coordinate Zn(2+). Catalysis depends on E129, which acts as the Proton donor/acceptor. Residue H185 participates in Zn(2+) binding.

This sequence belongs to the aldolase class II family. MtnB subfamily. The cofactor is Zn(2+).

The protein resides in the cytoplasm. The enzyme catalyses 5-(methylsulfanyl)-D-ribulose 1-phosphate = 5-methylsulfanyl-2,3-dioxopentyl phosphate + H2O. It participates in amino-acid biosynthesis; L-methionine biosynthesis via salvage pathway; L-methionine from S-methyl-5-thio-alpha-D-ribose 1-phosphate: step 2/6. Catalyzes the dehydration of methylthioribulose-1-phosphate (MTRu-1-P) into 2,3-diketo-5-methylthiopentyl-1-phosphate (DK-MTP-1-P). This chain is Probable methylthioribulose-1-phosphate dehydratase, found in Drosophila melanogaster (Fruit fly).